The primary structure comprises 378 residues: MSKSLRKTHPLLKMANNALVDLPAPSNISAWWNFGSLLGLCLIIQILTGLFLAMHYTADIETAFNSVNHIYRDVNNGWFLRICHANGASFFFACLFIHVGRGVYYNSYLYIPTWMIGVIILFMVMATGFLGYVLPWGQMSFWGATVITNLLSAVPYLGTDLVQWIWGGFAVDNATLTRFFTFHFILPFIVLALTMIHLLFLHQTGSNNPLGLNSNVDKIPFHPYFVYKDIVGFIIFMWILIGFIWKFNYLLMDPENFIPANPLVTPVHIQPEWYFLFAYAILRSIPNKLGGVIALVLSIAILMILPFTHTSKFRGLQFYPLNQILFWNMVIVASLLTWIGARPVEDPYVLTGQILTVLYFSYFIINPLMSKYWDKLLN.

The next 4 helical transmembrane spans lie at 34-54, 78-99, 114-134, and 179-199; these read FGSL…FLAM, WFLR…FIHV, WMIG…GYVL, and FFTF…IHLL. Positions 84 and 98 each coordinate heme b. Residues histidine 183 and histidine 197 each coordinate heme b. Histidine 202 contacts a ubiquinone. Transmembrane regions (helical) follow at residues 227 to 247, 289 to 309, 321 to 341, and 348 to 368; these read YKDI…IWKF, LGGV…PFTH, LNQI…WIGA, and YVLT…INPL.

This sequence belongs to the cytochrome b family. In terms of assembly, the main subunits of complex b-c1 are: cytochrome b, cytochrome c1 and the Rieske protein. Requires heme b as cofactor.

Its subcellular location is the mitochondrion inner membrane. In terms of biological role, component of the ubiquinol-cytochrome c reductase complex (complex III or cytochrome b-c1 complex) that is part of the mitochondrial respiratory chain. The b-c1 complex mediates electron transfer from ubiquinol to cytochrome c. Contributes to the generation of a proton gradient across the mitochondrial membrane that is then used for ATP synthesis. In Aedes aegypti (Yellowfever mosquito), this protein is Cytochrome b.